Here is a 122-residue protein sequence, read N- to C-terminus: Large ribosomal subunit protein uL14 (122 aa).

It belongs to the universal ribosomal protein uL14 family. Part of the 50S ribosomal subunit. Forms a cluster with proteins L3 and L19. In the 70S ribosome, L14 and L19 interact and together make contacts with the 16S rRNA in bridges B5 and B8.

Binds to 23S rRNA. Forms part of two intersubunit bridges in the 70S ribosome. This Methylibium petroleiphilum (strain ATCC BAA-1232 / LMG 22953 / PM1) protein is Large ribosomal subunit protein uL14.